Reading from the N-terminus, the 225-residue chain is Ribonuclease 3 (225 aa).

Residues 7–129 form the RNase III domain; the sequence is IPRLCRTLGY…IIGAIYLDSE (123 aa). Glu-42 provides a ligand contact to Mg(2+). Asp-46 is an active-site residue. 2 residues coordinate Mg(2+): Asp-115 and Glu-118. The active site involves Glu-118. The 71-residue stretch at 155–225 folds into the DRBM domain; the sequence is DPKTLLQEHL…AAQVLELMKK (71 aa).

It belongs to the ribonuclease III family. In terms of assembly, homodimer. Mg(2+) is required as a cofactor.

The protein resides in the cytoplasm. It catalyses the reaction Endonucleolytic cleavage to 5'-phosphomonoester.. In terms of biological role, digests double-stranded RNA. Involved in the processing of primary rRNA transcript to yield the immediate precursors to the large and small rRNAs (23S and 16S). Processes some mRNAs, and tRNAs when they are encoded in the rRNA operon. Processes pre-crRNA and tracrRNA of type II CRISPR loci if present in the organism. This Shewanella halifaxensis (strain HAW-EB4) protein is Ribonuclease 3.